The primary structure comprises 582 residues: Proline--tRNA ligase (582 aa).

This sequence belongs to the class-II aminoacyl-tRNA synthetase family. ProS type 1 subfamily. As to quaternary structure, homodimer.

It localises to the cytoplasm. It catalyses the reaction tRNA(Pro) + L-proline + ATP = L-prolyl-tRNA(Pro) + AMP + diphosphate. In terms of biological role, catalyzes the attachment of proline to tRNA(Pro) in a two-step reaction: proline is first activated by ATP to form Pro-AMP and then transferred to the acceptor end of tRNA(Pro). As ProRS can inadvertently accommodate and process non-cognate amino acids such as alanine and cysteine, to avoid such errors it has two additional distinct editing activities against alanine. One activity is designated as 'pretransfer' editing and involves the tRNA(Pro)-independent hydrolysis of activated Ala-AMP. The other activity is designated 'posttransfer' editing and involves deacylation of mischarged Ala-tRNA(Pro). The misacylated Cys-tRNA(Pro) is not edited by ProRS. This is Proline--tRNA ligase from Mycobacterium avium (strain 104).